A 258-amino-acid chain; its full sequence is Regulatory protein RecX (258 aa).

The protein belongs to the RecX family.

It is found in the cytoplasm. Functionally, modulates RecA activity. In Streptococcus pneumoniae serotype 19F (strain G54), this protein is Regulatory protein RecX.